The chain runs to 33 residues: Photosystem II reaction center protein Psb30 (33 aa).

The chain crosses the membrane as a helical span at residues 5–25 (LITQLASLILIVASGPIVIGL).

Belongs to the Psb30/Ycf12 family. As to quaternary structure, PSII is composed of 1 copy each of membrane proteins PsbA, PsbB, PsbC, PsbD, PsbE, PsbF, PsbH, PsbI, PsbJ, PsbK, PsbL, PsbM, PsbT, PsbX, PsbY, PsbZ, Psb30/Ycf12, peripheral proteins of the oxygen-evolving complex and a large number of cofactors. It forms dimeric complexes.

The protein resides in the plastid. Its subcellular location is the chloroplast thylakoid membrane. Functionally, a core subunit of photosystem II (PSII), probably helps stabilize the reaction center. The polypeptide is Photosystem II reaction center protein Psb30 (Lepocinclis buetschlii).